The sequence spans 102 residues: UPF0213 protein XCC3072 (102 aa).

One can recognise a GIY-YIG domain in the interval 5–80 (KPWHLYLLLC…KQQPRARKLA (76 aa)).

Belongs to the UPF0213 family.

The chain is UPF0213 protein XCC3072 from Xanthomonas campestris pv. campestris (strain ATCC 33913 / DSM 3586 / NCPPB 528 / LMG 568 / P 25).